The chain runs to 434 residues: Ribosomal protein uS12 methylthiotransferase RimO (434 aa).

Residues asparagine 6–arginine 122 enclose the MTTase N-terminal domain. Residues cysteine 15, cysteine 51, cysteine 85, cysteine 146, cysteine 150, and cysteine 153 each coordinate [4Fe-4S] cluster. Residues threonine 132 to glutamate 361 form the Radical SAM core domain. One can recognise a TRAM domain in the interval lysine 364–lysine 431.

It belongs to the methylthiotransferase family. RimO subfamily. The cofactor is [4Fe-4S] cluster.

The protein resides in the cytoplasm. It catalyses the reaction L-aspartate(89)-[ribosomal protein uS12]-hydrogen + (sulfur carrier)-SH + AH2 + 2 S-adenosyl-L-methionine = 3-methylsulfanyl-L-aspartate(89)-[ribosomal protein uS12]-hydrogen + (sulfur carrier)-H + 5'-deoxyadenosine + L-methionine + A + S-adenosyl-L-homocysteine + 2 H(+). Functionally, catalyzes the methylthiolation of an aspartic acid residue of ribosomal protein uS12. The protein is Ribosomal protein uS12 methylthiotransferase RimO of Chlorobium phaeovibrioides (strain DSM 265 / 1930) (Prosthecochloris vibrioformis (strain DSM 265)).